The primary structure comprises 359 residues: 3-dehydroquinate synthase (359 aa).

Residues 71–76, 105–109, 129–130, K142, and K151 contribute to the NAD(+) site; these read DGEAYK, GVIGD, and TT. Zn(2+)-binding residues include E184, H247, and H264.

It belongs to the sugar phosphate cyclases superfamily. Dehydroquinate synthase family. Co(2+) serves as cofactor. It depends on Zn(2+) as a cofactor. Requires NAD(+) as cofactor.

The protein resides in the cytoplasm. It carries out the reaction 7-phospho-2-dehydro-3-deoxy-D-arabino-heptonate = 3-dehydroquinate + phosphate. It participates in metabolic intermediate biosynthesis; chorismate biosynthesis; chorismate from D-erythrose 4-phosphate and phosphoenolpyruvate: step 2/7. In terms of biological role, catalyzes the conversion of 3-deoxy-D-arabino-heptulosonate 7-phosphate (DAHP) to dehydroquinate (DHQ). This is 3-dehydroquinate synthase from Burkholderia vietnamiensis (strain G4 / LMG 22486) (Burkholderia cepacia (strain R1808)).